A 130-amino-acid polypeptide reads, in one-letter code: Large ribosomal subunit protein bL19 (130 aa).

This sequence belongs to the bacterial ribosomal protein bL19 family.

Its function is as follows. This protein is located at the 30S-50S ribosomal subunit interface and may play a role in the structure and function of the aminoacyl-tRNA binding site. In Burkholderia ambifaria (strain ATCC BAA-244 / DSM 16087 / CCUG 44356 / LMG 19182 / AMMD) (Burkholderia cepacia (strain AMMD)), this protein is Large ribosomal subunit protein bL19.